The primary structure comprises 276 residues: Undecaprenyl-diphosphatase (276 aa).

7 consecutive transmembrane segments (helical) span residues 1–21, 39–59, 84–104, 115–135, 188–208, 222–242, and 253–273; these read MSWL…FLPV, AGAS…LVYF, YWLG…GLLF, LWLV…AEYY, FGFL…LPDA, QLFV…AWFL, and FVGY…AGVV.

Belongs to the UppP family.

The protein localises to the cell membrane. It carries out the reaction di-trans,octa-cis-undecaprenyl diphosphate + H2O = di-trans,octa-cis-undecaprenyl phosphate + phosphate + H(+). Functionally, catalyzes the dephosphorylation of undecaprenyl diphosphate (UPP). Confers resistance to bacitracin. This is Undecaprenyl-diphosphatase from Mycolicibacterium vanbaalenii (strain DSM 7251 / JCM 13017 / BCRC 16820 / KCTC 9966 / NRRL B-24157 / PYR-1) (Mycobacterium vanbaalenii).